Here is a 360-residue protein sequence, read N- to C-terminus: Protein NDRG2 (360 aa).

The interval 325–360 (RTASLSSEGNRSRSRTLSQSSESGGGPPAPLAEVTC) is disordered.

This sequence belongs to the NDRG family.

The protein resides in the cytoplasm. Its function is as follows. Contributes to the regulation of the Wnt signaling pathway. Down-regulates CTNNB1-mediated transcriptional activation of target genes. May be involved in neuron differentiation. This is Protein NDRG2 from Xenopus tropicalis (Western clawed frog).